Here is a 256-residue protein sequence, read N- to C-terminus: Ubiquinone biosynthesis O-methyltransferase (256 aa).

Arg44, Gly80, Asp101, and Met144 together coordinate S-adenosyl-L-methionine.

This sequence belongs to the methyltransferase superfamily. UbiG/COQ3 family.

The catalysed reaction is a 3-demethylubiquinol + S-adenosyl-L-methionine = a ubiquinol + S-adenosyl-L-homocysteine + H(+). It catalyses the reaction a 3-(all-trans-polyprenyl)benzene-1,2-diol + S-adenosyl-L-methionine = a 2-methoxy-6-(all-trans-polyprenyl)phenol + S-adenosyl-L-homocysteine + H(+). It participates in cofactor biosynthesis; ubiquinone biosynthesis. In terms of biological role, O-methyltransferase that catalyzes the 2 O-methylation steps in the ubiquinone biosynthetic pathway. In Methylocella silvestris (strain DSM 15510 / CIP 108128 / LMG 27833 / NCIMB 13906 / BL2), this protein is Ubiquinone biosynthesis O-methyltransferase.